The primary structure comprises 486 residues: Stretch-activated cation channel yam8 (486 aa).

An N-terminal signal peptide occupies residues 1-24 (MFFFSTHLILKILFFWSITRNIFG). Over 25-464 (ATYTSLLLNN…PGVEFYESGS (440 aa)) the chain is Extracellular. 5 N-linked (GlcNAc...) asparagine glycosylation sites follow: Asn-33, Asn-49, Asn-59, Asn-82, and Asn-93. The helical transmembrane segment at 465-485 (ALLNISWRTFFISLIFWILFV) threads the bilayer. Residue Glu-486 is a topological domain, cytoplasmic.

The protein localises to the cell membrane. In terms of biological role, calcium-permeable, cation-selective stretch-activated channel (SAC) that functions together with CCH1 to mediate calcium entry into cells. Required during mating. This Schizosaccharomyces pombe (strain 972 / ATCC 24843) (Fission yeast) protein is Stretch-activated cation channel yam8.